The chain runs to 20 residues: Styelin-A (20 aa).

Hemocytes and pharyngeal tissues.

Its subcellular location is the secreted. Bactericidal against several Gram-positive and Gram-negative bacteria. The sequence is that of Styelin-A from Styela clava (Sea squirt).